The following is a 418-amino-acid chain: Gamma-glutamyl phosphate reductase (418 aa).

This sequence belongs to the gamma-glutamyl phosphate reductase family.

Its subcellular location is the cytoplasm. It catalyses the reaction L-glutamate 5-semialdehyde + phosphate + NADP(+) = L-glutamyl 5-phosphate + NADPH + H(+). The protein operates within amino-acid biosynthesis; L-proline biosynthesis; L-glutamate 5-semialdehyde from L-glutamate: step 2/2. Functionally, catalyzes the NADPH-dependent reduction of L-glutamate 5-phosphate into L-glutamate 5-semialdehyde and phosphate. The product spontaneously undergoes cyclization to form 1-pyrroline-5-carboxylate. This chain is Gamma-glutamyl phosphate reductase, found in Thermobifida fusca (strain YX).